The chain runs to 343 residues: UDP-3-O-acylglucosamine N-acyltransferase 2 (343 aa).

His-251 (proton acceptor) is an active-site residue.

This sequence belongs to the transferase hexapeptide repeat family. LpxD subfamily. Homotrimer.

The enzyme catalyses a UDP-3-O-[(3R)-3-hydroxyacyl]-alpha-D-glucosamine + a (3R)-hydroxyacyl-[ACP] = a UDP-2-N,3-O-bis[(3R)-3-hydroxyacyl]-alpha-D-glucosamine + holo-[ACP] + H(+). It participates in bacterial outer membrane biogenesis; LPS lipid A biosynthesis. Its function is as follows. Catalyzes the N-acylation of UDP-3-O-acylglucosamine using 3-hydroxyacyl-ACP as the acyl donor. Is involved in the biosynthesis of lipid A, a phosphorylated glycolipid that anchors the lipopolysaccharide to the outer membrane of the cell. The polypeptide is UDP-3-O-acylglucosamine N-acyltransferase 2 (Legionella pneumophila subsp. pneumophila (strain Philadelphia 1 / ATCC 33152 / DSM 7513)).